A 181-amino-acid polypeptide reads, in one-letter code: Inner membrane-spanning protein YciB (181 aa).

5 helical membrane passes run 10–30, 50–70, 80–100, 118–138, and 148–168; these read LVIF…GALI, MHLI…VFHD, IIYS…KSIL, VTWY…YVAF, and FKVF…VFYL.

This sequence belongs to the YciB family.

Its subcellular location is the cell inner membrane. In terms of biological role, plays a role in cell envelope biogenesis, maintenance of cell envelope integrity and membrane homeostasis. In Shewanella baltica (strain OS223), this protein is Inner membrane-spanning protein YciB.